We begin with the raw amino-acid sequence, 417 residues long: Glucose-1-phosphate adenylyltransferase (417 aa).

Residues Tyr-98, Gly-163, Glu-178 to Lys-179, and Ser-197 each bind alpha-D-glucose 1-phosphate.

It belongs to the bacterial/plant glucose-1-phosphate adenylyltransferase family. As to quaternary structure, homotetramer.

It catalyses the reaction alpha-D-glucose 1-phosphate + ATP + H(+) = ADP-alpha-D-glucose + diphosphate. The protein operates within glycan biosynthesis; glycogen biosynthesis. Functionally, involved in the biosynthesis of ADP-glucose, a building block required for the elongation reactions to produce glycogen. Catalyzes the reaction between ATP and alpha-D-glucose 1-phosphate (G1P) to produce pyrophosphate and ADP-Glc. The protein is Glucose-1-phosphate adenylyltransferase of Koribacter versatilis (strain Ellin345).